A 207-amino-acid polypeptide reads, in one-letter code: Holliday junction branch migration complex subunit RuvA (207 aa).

The tract at residues 1–65 is domain I; the sequence is MYDYIRGTLT…ETEHLLYGFH (65 aa). The domain II stretch occupies residues 66–144; it reads SREERECFRI…DLLPLDSRVE (79 aa). Positions 145–150 are flexible linker; sequence TSQTHT. The tract at residues 150–207 is domain III; that stretch reads TTSSCLEEGIQALAALGYSKIAAERMIAEAIKDLPEGSSLTDILPIALKKNFSGVNKD.

It belongs to the RuvA family. In terms of assembly, homotetramer. Forms an RuvA(8)-RuvB(12)-Holliday junction (HJ) complex. HJ DNA is sandwiched between 2 RuvA tetramers; dsDNA enters through RuvA and exits via RuvB. An RuvB hexamer assembles on each DNA strand where it exits the tetramer. Each RuvB hexamer is contacted by two RuvA subunits (via domain III) on 2 adjacent RuvB subunits; this complex drives branch migration. In the full resolvosome a probable DNA-RuvA(4)-RuvB(12)-RuvC(2) complex forms which resolves the HJ.

Its subcellular location is the cytoplasm. In terms of biological role, the RuvA-RuvB-RuvC complex processes Holliday junction (HJ) DNA during genetic recombination and DNA repair, while the RuvA-RuvB complex plays an important role in the rescue of blocked DNA replication forks via replication fork reversal (RFR). RuvA specifically binds to HJ cruciform DNA, conferring on it an open structure. The RuvB hexamer acts as an ATP-dependent pump, pulling dsDNA into and through the RuvAB complex. HJ branch migration allows RuvC to scan DNA until it finds its consensus sequence, where it cleaves and resolves the cruciform DNA. The protein is Holliday junction branch migration complex subunit RuvA of Chlamydia pneumoniae (Chlamydophila pneumoniae).